The chain runs to 118 residues: Hydrogenase maturation factor HypA (118 aa).

Residue His2 participates in Ni(2+) binding. Zn(2+) contacts are provided by Cys73, Cys76, Cys90, and Cys93.

Belongs to the HypA/HybF family.

In terms of biological role, involved in the maturation of [NiFe] hydrogenases. Required for nickel insertion into the metal center of the hydrogenase. This Salmonella typhi protein is Hydrogenase maturation factor HypA.